Reading from the N-terminus, the 441-residue chain is Ribosomal protein uS12 methylthiotransferase RimO (441 aa).

The 111-residue stretch at 8-118 (PKIGFVSLGC…VLEHVHHYVP (111 aa)) folds into the MTTase N-terminal domain. Residues cysteine 17, cysteine 53, cysteine 82, cysteine 150, cysteine 154, and cysteine 157 each coordinate [4Fe-4S] cluster. One can recognise a Radical SAM core domain in the interval 136-373 (LTPRHYAYLK…MQLQQQISAE (238 aa)). In terms of domain architecture, TRAM spans 376-441 (QEKVGREILV…DEYDLWGSRV (66 aa)).

It belongs to the methylthiotransferase family. RimO subfamily. The cofactor is [4Fe-4S] cluster.

Its subcellular location is the cytoplasm. It catalyses the reaction L-aspartate(89)-[ribosomal protein uS12]-hydrogen + (sulfur carrier)-SH + AH2 + 2 S-adenosyl-L-methionine = 3-methylsulfanyl-L-aspartate(89)-[ribosomal protein uS12]-hydrogen + (sulfur carrier)-H + 5'-deoxyadenosine + L-methionine + A + S-adenosyl-L-homocysteine + 2 H(+). Catalyzes the methylthiolation of an aspartic acid residue of ribosomal protein uS12. The sequence is that of Ribosomal protein uS12 methylthiotransferase RimO from Shigella boydii serotype 18 (strain CDC 3083-94 / BS512).